Reading from the N-terminus, the 352-residue chain is Cyclin-dependent kinase 7 (352 aa).

Residues 18 to 301 (YEKLDFLGEG…ASQALRKRYF (284 aa)) enclose the Protein kinase domain. Residues 24 to 32 (LGEGQFATV) and lysine 47 each bind ATP. Aspartate 143 acts as the Proton acceptor in catalysis. Serine 170 is subject to Phosphoserine; by CDK1 and CDK2. Threonine 176 carries the post-translational modification Phosphothreonine; by CDK2.

It belongs to the protein kinase superfamily. CMGC Ser/Thr protein kinase family. CDC2/CDKX subfamily. As to quaternary structure, probably associates with cyclin-H (ccnh) and mat1 to form a multimeric active enzyme. Phosphorylation of Ser-170 during mitosis inactivates the enzyme. Phosphorylation of Thr-176 is required for activity. Phosphorylated at Ser-170 and Thr-176 by CDK2.

It is found in the nucleus. It catalyses the reaction L-seryl-[protein] + ATP = O-phospho-L-seryl-[protein] + ADP + H(+). The catalysed reaction is L-threonyl-[protein] + ATP = O-phospho-L-threonyl-[protein] + ADP + H(+). The enzyme catalyses [DNA-directed RNA polymerase] + ATP = phospho-[DNA-directed RNA polymerase] + ADP + H(+). Phosphorylation at Thr-176 is required for enzymatic activity. Its function is as follows. Serine/threonine kinase involved in cell cycle control and in RNA polymerase II-mediated RNA transcription. Cyclin-dependent kinases (CDKs) are activated by the binding to a cyclin and mediate the progression through the cell cycle. Each different complex controls a specific transition between 2 subsequent phases in the cell cycle. Required for both activation and complex formation of cdk1/cyclin-B during G2-M transition, and for activation of cdk2/cyclins during G1-S transition (but not complex formation). cdk7 is the catalytic subunit of the CDK-activating kinase (CAK) complex. CAK activates the cyclin-associated kinases cdk1, cdk2, cdk4 and cdk6 by threonine phosphorylation, thus regulating cell cycle progression. Initiates transcription by RNA polymerase II by mediating phosphorylation of polr2a at 'Ser-5' of the repetitive C-terminal domain (CTD) when polr2a is in complex with DNA, promoting dissociation from DNA and initiation. CAK complexed to the core-TFIIH basal transcription factor activates RNA polymerase II by serine phosphorylation of the CTD of polr2a, allowing its escape from the promoter and elongation of the transcripts. The protein is Cyclin-dependent kinase 7 (cdk7) of Xenopus laevis (African clawed frog).